The chain runs to 663 residues: Cytochrome bo(3) ubiquinol oxidase subunit 1 (663 aa).

Residues 1-16 (MFGKLSLDAVPFHEPI) are Periplasmic-facing. The chain crosses the membrane as a helical span at residues 17 to 35 (VMVTIAGIILGGLALVGLI). The Cytoplasmic portion of the chain corresponds to 36–52 (TYFGKWTYLWKEWLTSV). The chain crosses the membrane as a helical span at residues 53–80 (DHKRLGIMYIIVAIVMLLRGFADAIMMR). Ubiquinone-8 is bound by residues R71 and D75. Over 81–95 (SQQALASAGEAGFLP) the chain is Periplasmic. The chain crosses the membrane as a helical span at residues 96 to 132 (PHHYDQIFTAHGVIMIFFVAMPFVIGLMNLVVPLQIG). A ubiquinone-8-binding site is contributed by H98. Position 106 (H106) interacts with heme b. The Cytoplasmic portion of the chain corresponds to 133-137 (ARDVA). The helical transmembrane segment at 138–161 (FPFLNNLSFWFTVVGVILVNVSLG) threads the bilayer. The Periplasmic segment spans residues 162 to 184 (VGEFAQTGWLAYPPLSGIEYSPG). A heme b-binding site is contributed by W170. A helical transmembrane segment spans residues 185-215 (VGVDYWIWSLQLSGIGTTLTGINFFVTILKM). Residues 216–224 (RAPGMTMFK) are Cytoplasmic-facing. A helical membrane pass occupies residues 225-260 (MPVFTWASLCANVLIIASFPILTVTVALLTLDRYLG). Over 261–270 (THFFTNDMGG) the chain is Periplasmic. A helical transmembrane segment spans residues 271–307 (NMMMYINLIWAWGHPEVYILILPVFGVFSEIAATFSR). H284 provides a ligand contact to Cu(2+). Positions 284 to 288 (HPEVY) form a cross-link, 1'-histidyl-3'-tyrosine (His-Tyr). Fe(II)-heme o is bound at residue Y288. Residues 308–311 (KRLF) are Cytoplasmic-facing. Residues 312-326 (GYTSLVWATVCITVL) traverse the membrane as a helical segment. Residues 327–340 (SFIVWLHHFFTMGA) lie on the Periplasmic side of the membrane. Positions 333 and 334 each coordinate Cu(2+). The chain crosses the membrane as a helical span at residues 341-369 (GANVNAFFGITTMIIAIPTGVKIFNWLFT). Residues 370–377 (MYQGRIVF) are Cytoplasmic-facing. A helical membrane pass occupies residues 378 to 409 (HSAMLWTIGFIVTFSVGGMTGVLLAVPGADFV). At 410 to 412 (LHN) the chain is on the periplasmic side. H411 and H419 together coordinate Fe(II)-heme o. A helical transmembrane segment spans residues 413–445 (SLFLIAHFHNVIIGGVVFGCFAGMTYWWPKAFG). H421 contacts heme b. Topologically, residues 446 to 448 (FKL) are cytoplasmic. Residues 449–477 (NETWGKRAFWFWIIGFFVAFMPLYALGFM) form a helical membrane-spanning segment. The Periplasmic segment spans residues 478-489 (GMTRRLSQQIDP). 2 residues coordinate heme b: R481 and R482. The helical transmembrane segment at 490–521 (QFHTMLMIAASGAVLIALGILCLVIQMYVSIR) threads the bilayer. At 522–587 (DRDQNRDLTG…DHYEEIHMPK (66 aa)) the chain is on the cytoplasmic side. A helical transmembrane segment spans residues 588–606 (NSGAGIVIAAFSTIFGFAM). Residues 607-613 (IWHIWWL) lie on the Periplasmic side of the membrane. The chain crosses the membrane as a helical span at residues 614-632 (AIVGFAGMIITWIVKSFDE). Residues 633-663 (DVDYYVPVAEIEKLENQHFDEITKAGLKNGN) are Cytoplasmic-facing.

Belongs to the heme-copper respiratory oxidase family. The cytochrome bo(3) ubiquinol oxidase complex is a heterooctamer of two A chains, two B chains, two C chains and two D chains. Cu(2+) serves as cofactor. It depends on heme b as a cofactor. Requires Fe(II)-heme o as cofactor.

The protein resides in the cell inner membrane. It catalyses the reaction 2 a ubiquinol + O2 + n H(+)(in) = 2 a ubiquinone + 2 H2O + n H(+)(out). Cytochrome bo(3) ubiquinol oxidase is the terminal enzyme in the aerobic respiratory chain of E.coli that predominates when cells are grown at high aeration. Catalyzes the four-electron reduction of O2 to water, using a ubiquinol as a membrane soluble electron donor for molecular oxygen reduction; ubiquinol-8 is the natural substrate for E.coli. Has proton pump activity across the membrane in addition to electron transfer, pumping 2 protons/electron and generating a proton motive force. All the redox centers of this enzyme complex are located within the largest subunit, subunit I. Protons are probably pumped via D- and K- channels found in this subunit. This is Cytochrome bo(3) ubiquinol oxidase subunit 1 (cyoB) from Escherichia coli O157:H7.